A 119-amino-acid polypeptide reads, in one-letter code: Large ribosomal subunit protein uL18 (119 aa).

The protein belongs to the universal ribosomal protein uL18 family. As to quaternary structure, part of the 50S ribosomal subunit; part of the 5S rRNA/L5/L18/L25 subcomplex. Contacts the 5S and 23S rRNAs.

In terms of biological role, this is one of the proteins that bind and probably mediate the attachment of the 5S RNA into the large ribosomal subunit, where it forms part of the central protuberance. This is Large ribosomal subunit protein uL18 from Micrococcus luteus (Micrococcus lysodeikticus).